A 209-amino-acid polypeptide reads, in one-letter code: Iron-sulfur cluster assembly 2 homolog, mitochondrial (209 aa).

The transit peptide at 1-27 directs the protein to the mitochondrion; sequence MIRSIFKKNSSLPYFLKRSFITKPHSI. 3 residues coordinate Fe cation: Cys134, Cys199, and Cys201.

Belongs to the HesB/IscA family. Requires Fe cation as cofactor.

The protein localises to the mitochondrion. In terms of biological role, involved in the maturation of mitochondrial 4Fe-4S proteins functioning late in the iron-sulfur cluster assembly pathway. May be involved in the binding of an intermediate of Fe/S cluster assembly. The sequence is that of Iron-sulfur cluster assembly 2 homolog, mitochondrial (isca2) from Dictyostelium discoideum (Social amoeba).